Reading from the N-terminus, the 241-residue chain is Thyroid transcription factor 1-associated protein 26 (241 aa).

Disordered regions lie at residues M1 to V22 and K182 to K205. The segment covering K186 to R202 has biased composition (basic and acidic residues).

It belongs to the TAP26 family. In terms of assembly, interacts with NKX2-1. As to expression, ubiquitously expressed. In lung, expression is restricted to the alveolar epithelial cells.

It localises to the nucleus. Functionally, component of the transcription complexes of the pulmonary surfactant-associated protein-B (SFTPB) and -C (SFTPC). Enhances homeobox protein Nkx-2.1-activated SFTPB and SFTPC promoter activities. This is Thyroid transcription factor 1-associated protein 26 (CCDC59) from Homo sapiens (Human).